Consider the following 360-residue polypeptide: Phospho-N-acetylmuramoyl-pentapeptide-transferase (360 aa).

10 helical membrane-spanning segments follow: residues 26–46 (AILGLLTALIFSLWWGPKLIE), 74–94 (MGGLLILAAIFISVLLWGDLG), 97–117 (YVWVMLFVLGSFGLIGFIDDY), 134–154 (YILQSLAALLIAFFLYATAAN), 168–188 (VMPQLGGVFIVLAYFTIVGSS), 199–219 (GLAIMPTVMVAAAFALIAYLS), 236–256 (SGELVIVCTAIVGAGLGFLWF), 263–283 (VFMGDVGSLSLGAALGAIAVL), 288–308 (ILLVIMGGVFVMETVSVILQV), and 338–358 (VIVRFWIISIFLVLLGLATLK).

It belongs to the glycosyltransferase 4 family. MraY subfamily. Mg(2+) serves as cofactor.

It localises to the cell inner membrane. It carries out the reaction UDP-N-acetyl-alpha-D-muramoyl-L-alanyl-gamma-D-glutamyl-meso-2,6-diaminopimeloyl-D-alanyl-D-alanine + di-trans,octa-cis-undecaprenyl phosphate = di-trans,octa-cis-undecaprenyl diphospho-N-acetyl-alpha-D-muramoyl-L-alanyl-D-glutamyl-meso-2,6-diaminopimeloyl-D-alanyl-D-alanine + UMP. The protein operates within cell wall biogenesis; peptidoglycan biosynthesis. Functionally, catalyzes the initial step of the lipid cycle reactions in the biosynthesis of the cell wall peptidoglycan: transfers peptidoglycan precursor phospho-MurNAc-pentapeptide from UDP-MurNAc-pentapeptide onto the lipid carrier undecaprenyl phosphate, yielding undecaprenyl-pyrophosphoryl-MurNAc-pentapeptide, known as lipid I. The sequence is that of Phospho-N-acetylmuramoyl-pentapeptide-transferase from Shewanella putrefaciens (strain CN-32 / ATCC BAA-453).